The sequence spans 368 residues: Glucose 1-dehydrogenase 2 (368 aa).

Cys-41 contributes to the Zn(2+) binding site. Thr-43 provides a ligand contact to substrate. Positions 68 and 69 each coordinate Zn(2+). Asn-91 lines the substrate pocket. 5 residues coordinate Zn(2+): Cys-95, Cys-98, Cys-101, Cys-109, and Gln-152. The substrate site is built by Gln-152 and Asp-156. NADP(+) is bound by residues 213–215 (NRR), 279–281 (FGF), 307–309 (LDN), and Lys-356. Asn-309 is a substrate binding site.

This sequence belongs to the zinc-containing alcohol dehydrogenase family. Glucose 1-dehydrogenase subfamily. Requires Zn(2+) as cofactor.

It catalyses the reaction D-glucose + NAD(+) = D-glucono-1,5-lactone + NADH + H(+). The catalysed reaction is D-glucose + NADP(+) = D-glucono-1,5-lactone + NADPH + H(+). Functionally, catalyzes the NAD(P)(+)-dependent oxidation of D-glucose to D-gluconate via gluconolactone. Can utilize both NAD(+) and NADP(+) as electron acceptor. Is involved in the degradation of glucose through a non-phosphorylative variant of the Entner-Doudoroff pathway. In Saccharolobus solfataricus (strain ATCC 35092 / DSM 1617 / JCM 11322 / P2) (Sulfolobus solfataricus), this protein is Glucose 1-dehydrogenase 2.